Reading from the N-terminus, the 264-residue chain is 3-methyl-2-oxobutanoate hydroxymethyltransferase (264 aa).

Mg(2+) contacts are provided by aspartate 44 and aspartate 83. 3-methyl-2-oxobutanoate contacts are provided by residues 44 to 45 (DS), aspartate 83, and lysine 111. Position 113 (glutamate 113) interacts with Mg(2+). Glutamate 180 (proton acceptor) is an active-site residue.

It belongs to the PanB family. In terms of assembly, homodecamer; pentamer of dimers. Mg(2+) serves as cofactor.

It localises to the cytoplasm. The catalysed reaction is 3-methyl-2-oxobutanoate + (6R)-5,10-methylene-5,6,7,8-tetrahydrofolate + H2O = 2-dehydropantoate + (6S)-5,6,7,8-tetrahydrofolate. It functions in the pathway cofactor biosynthesis; (R)-pantothenate biosynthesis; (R)-pantoate from 3-methyl-2-oxobutanoate: step 1/2. Catalyzes the reversible reaction in which hydroxymethyl group from 5,10-methylenetetrahydrofolate is transferred onto alpha-ketoisovalerate to form ketopantoate. This Marinobacter nauticus (strain ATCC 700491 / DSM 11845 / VT8) (Marinobacter aquaeolei) protein is 3-methyl-2-oxobutanoate hydroxymethyltransferase.